The following is a 271-amino-acid chain: Cobalt import ATP-binding protein CbiO (271 aa).

The ABC transporter domain occupies 2–236; sequence LATSDLWFRY…TEAMEHAGLT (235 aa). Position 34–41 (34–41) interacts with ATP; the sequence is GANGCGKS.

This sequence belongs to the ABC transporter superfamily. Cobalt importer (TC 3.A.1.18.1) family. Forms an energy-coupling factor (ECF) transporter complex composed of an ATP-binding protein (A component, CbiO), a transmembrane protein (T component, CbiQ) and 2 possible substrate-capture proteins (S components, CbiM and CbiN) of unknown stoichimetry.

The protein localises to the cell inner membrane. The protein operates within cofactor biosynthesis; adenosylcobalamin biosynthesis. Functionally, part of the energy-coupling factor (ECF) transporter complex CbiMNOQ involved in cobalt import. Presumably responsible for energy coupling to the transport system. The protein is Cobalt import ATP-binding protein CbiO of Salmonella typhi.